A 397-amino-acid polypeptide reads, in one-letter code: DNA-directed RNA polymerase subunit Rpo1C (397 aa).

It belongs to the RNA polymerase beta' chain family. Part of the RNA polymerase complex.

The protein localises to the cytoplasm. It carries out the reaction RNA(n) + a ribonucleoside 5'-triphosphate = RNA(n+1) + diphosphate. Its function is as follows. DNA-dependent RNA polymerase (RNAP) catalyzes the transcription of DNA into RNA using the four ribonucleoside triphosphates as substrates. Forms part of the jaw domain. This chain is DNA-directed RNA polymerase subunit Rpo1C, found in Methanococcus aeolicus (strain ATCC BAA-1280 / DSM 17508 / OCM 812 / Nankai-3).